Reading from the N-terminus, the 145-residue chain is Respiratory supercomplex factor 1, mitochondrial (145 aa).

In terms of domain architecture, HIG1 spans 6 to 97; sequence LPSSFDAHPE…QERRQRKEFE (92 aa). Helical transmembrane passes span 33–50 and 69–86; these read PLIPIGYAATSYALWRAY and IYGHAFTLFAIVAGGIYY. Residues 86-144 adopt a coiled-coil conformation; the sequence is YGQERRQRKEFEKALQQKQDQEKRDAWLKELEIRDKEDKNWRQRHAAIEMAAKEAEKKR.

The protein belongs to the RCF1 family. In terms of assembly, associates with the respiratory chain complex III/complex IV supercomplex.

It localises to the mitochondrion membrane. Functionally, cytochrome c oxidase subunit which plays a role in assembly of respiratory supercomplexes. The chain is Respiratory supercomplex factor 1, mitochondrial (RCF1) from Ajellomyces capsulatus (strain NAm1 / WU24) (Darling's disease fungus).